Reading from the N-terminus, the 160-residue chain is Ureidoglycolate lyase (160 aa).

The protein belongs to the ureidoglycolate lyase family. Homodimer. Ni(2+) is required as a cofactor.

It catalyses the reaction (S)-ureidoglycolate = urea + glyoxylate. Its pathway is nitrogen metabolism; (S)-allantoin degradation. Functionally, catalyzes the catabolism of the allantoin degradation intermediate (S)-ureidoglycolate, generating urea and glyoxylate. Involved in the utilization of allantoin as nitrogen source. The protein is Ureidoglycolate lyase of Salmonella agona (strain SL483).